We begin with the raw amino-acid sequence, 165 residues long: Cyclic pyranopterin monophosphate synthase (165 aa).

Residues 83–85 (FCH) and 120–121 (ME) contribute to the substrate site. Residue aspartate 135 is part of the active site.

Belongs to the MoaC family. In terms of assembly, homohexamer; trimer of dimers.

The enzyme catalyses (8S)-3',8-cyclo-7,8-dihydroguanosine 5'-triphosphate = cyclic pyranopterin phosphate + diphosphate. It functions in the pathway cofactor biosynthesis; molybdopterin biosynthesis. Catalyzes the conversion of (8S)-3',8-cyclo-7,8-dihydroguanosine 5'-triphosphate to cyclic pyranopterin monophosphate (cPMP). The protein is Cyclic pyranopterin monophosphate synthase of Xanthomonas axonopodis pv. citri (strain 306).